Reading from the N-terminus, the 944-residue chain is Calcium-transporting ATPase type 2C member 2 (944 aa).

Residues 1–104 lie on the Cytoplasmic side of the membrane; that stretch reads MGRRFKFLQK…DNTEPVWKKY (104 aa). The segment at 69–93 is interaction with ORAI1; it reads VDLDSGLSEFAVAQRRLVHGWNEFV. The helical transmembrane segment at 105-125 threads the bilayer; sequence LDQFRNPLILLLLGSSVVSVL. The Extracellular segment spans residues 126–127; it reads TK. Residues 128–148 traverse the membrane as a helical segment; it reads EYEDAISIALAVLIVVTVGFI. Topologically, residues 149-229 are cytoplasmic; that stretch reads QEYRSEKSLE…EVEPCSKTDS (81 aa). A helical transmembrane segment spans residues 230–250; the sequence is PLAGGGDLSTLSNVVFMGTLV. Over 251–291 the chain is Extracellular; that stretch reads QCGKGQGVVIGTGEQSQFGEVFKMMRAEETPKTPLQKSMDK. Residue T262 is modified to Phosphothreonine. S266 is subject to Phosphoserine. The chain crosses the membrane as a helical span at residues 292-312; it reads LGKQLTVFSFGIIGLLMLVGW. The Cytoplasmic portion of the chain corresponds to 313-329; sequence VQGKPLLSMFTIGVSLA. V330, A331, I333, and E335 together coordinate Ca(2+). A helical transmembrane segment spans residues 330 to 350; that stretch reads VAAIPEGLPIVVMVTLVLGVL. Topologically, residues 351-748 are extracellular; the sequence is RMAKKRVIVK…IAALSLITLS (398 aa). The 4-aspartylphosphate intermediate role is filled by D377. Mg(2+) is bound by residues D672 and D676. Residues 749–769 form a helical membrane-spanning segment; that stretch reads TVCNLPNPLNAMQILWVNIIM. N766 and D770 together coordinate Ca(2+). Residues 770-802 are Cytoplasmic-facing; that stretch reads DGPPAQSLGVEPVDRDALKRPPRSVKDTILNRA. Residues 803-823 form a helical membrane-spanning segment; it reads LILKILMSAAVILGGTLFIFW. At 824–835 the chain is on the extracellular side; the sequence is REIPENRTSTPR. A helical membrane pass occupies residues 836 to 853; that stretch reads TTTMAFTCFVFFDLFNAL. Residues 854–872 lie on the Cytoplasmic side of the membrane; sequence SCRSQTKLIFEIGFFRNRM. A helical membrane pass occupies residues 873-893; the sequence is FLYSILGSLLGQLAVIYAPPL. At 894–903 the chain is on the extracellular side; sequence QKVFQTENLS. A helical membrane pass occupies residues 904–924; that stretch reads ALDLLLLTGLASSVFILSELL. Over 925–944 the chain is Cytoplasmic; it reads KLCEKFCSRAKADQMLPEAV.

It belongs to the cation transport ATPase (P-type) (TC 3.A.3) family. Type IIA subfamily. In terms of assembly, interacts (via N-terminus) with ORAI1 (via N- and C-termini); this interaction regulates Ca(2+) influx at the plasma membrane.

The protein resides in the golgi apparatus. The protein localises to the trans-Golgi network membrane. It is found in the cell membrane. Its subcellular location is the basolateral cell membrane. It carries out the reaction Ca(2+)(in) + ATP + H2O = Ca(2+)(out) + ADP + phosphate + H(+). The catalysed reaction is Mn(2+)(in) + ATP + H2O = Mn(2+)(out) + ADP + phosphate + H(+). In terms of biological role, ATP-driven pump that supplies the Golgi apparatus with Ca(2+) and Mn(2+) ions, both essential cofactors for processing and trafficking of newly synthesized proteins in the secretory pathway. Within a catalytic cycle, acquires Ca(2+) or Mn(2+) ions on the cytoplasmic side of the membrane and delivers them to the lumenal side. The transfer of ions across the membrane is coupled to ATP hydrolysis and is associated with a transient phosphorylation that shifts the pump conformation from inward-facing to outward-facing state. Induces Ca(2+) influx independently of its ATP-driven pump function. At the basolateral membrane of mammary epithelial cells, interacts with Ca(2+) channel ORAI1 and mediates Ca(2+) entry independently of the Ca(2+) content of endoplasmic reticulum or Golgi stores. May facilitate transepithelial transport of large quantities of Ca(2+) for milk secretion via activation of Ca(2+) influx channels at the plasma membrane and active Ca(2+) transport at the Golgi apparatus. In Rattus norvegicus (Rat), this protein is Calcium-transporting ATPase type 2C member 2 (Atp2c2).